Consider the following 278-residue polypeptide: Complement component 1 Q subcomponent-binding protein, mitochondrial (278 aa).

The transit peptide at 1 to 70 (MLPLLRCVPR…PVPCACGCGA (70 aa)) directs the protein to the mitochondrion. The C1q binding stretch occupies residues 73–90 (TEGDKAFVEFLTDEIKEE). An N6-acetyllysine mark is found at Lys88 and Lys91. The interval 133–162 (NNSIPPTFDGEEEPSQGQKAEEQEPERTST) is disordered. The interaction with MAVS stretch occupies residues 165–209 (FVVEVTKTDGKKTLVLDCHYPEDEIGHEDEAESDIFSIKEVSFQA). Tyr184 is modified (phosphotyrosine). A phosphoserine mark is found at Ser197 and Ser201. The residue at position 210 (Thr210) is a Phosphothreonine.

It belongs to the MAM33 family. In terms of assembly, homotrimer; three monomers form a donut-shaped structure with an unusually asymmetric charge distribution on the surface. Interacts with CDK13, HRK, VTN, NFYB, ADRA1B, FOXC1, DDX21, DDX50, NCL, SRSF1 and SRSF9. Interacts with CD93; the association may represent a cell surface C1q receptor. Interacts with KRT1; the association represents a cell surface kininogen receptor. Interacts with CD209; the interaction is indicative for a C1q:C1QBP:CD209 signaling complex. Interacts with FBL and RRP1; the respective interactions with C1QBP are competitive. Probably associates with the mitoribosome. Interacts with MAVS; the interaction occurs upon viral transfection. Interacts with PPIF. Interacts with U2AF1L4. Interacts with PLEKHN1. Interacts with VGF-derived peptide TLQP-21. Interacts with MRE11 and RAD50; forming the MRC (MRE11-RAD50-C1QBP) complex that inhibits the activity of MRE11. Ubiquitous.

It localises to the mitochondrion matrix. Its subcellular location is the nucleus. It is found in the cell membrane. The protein localises to the secreted. The protein resides in the cytoplasm. It localises to the nucleolus. Functionally, is believed to be a multifunctional and multicompartmental protein involved in inflammation and infection processes, ribosome biogenesis, protein synthesis in mitochondria, regulation of apoptosis, transcriptional regulation and pre-mRNA splicing. At the cell surface is thought to act as an endothelial receptor for plasma proteins of the complement and kallikrein-kinin cascades. Putative receptor for C1q; specifically binds to the globular 'heads' of C1q thus inhibiting C1; may perform the receptor function through a complex with C1qR/CD93. In complex with cytokeratin-1/KRT1 is a high affinity receptor for kininogen-1/HMWK. Can also bind other plasma proteins, such as coagulation factor XII leading to its autoactivation. May function to bind initially fluid kininogen-1 to the cell membrane. The secreted form may enhance both extrinsic and intrinsic coagulation pathways. It is postulated that the cell surface form requires docking with transmembrane proteins for downstream signaling which might be specific for a cell-type or response. By acting as C1q receptor is involved in chemotaxis of immature dendritic cells and neutrophils and is proposed to signal through CD209/DC-SIGN on immature dendritic cells, through integrin alpha-4/beta-1 during trophoblast invasion of the decidua, and through integrin beta-1 during endothelial cell adhesion and spreading. Signaling involved in inhibition of innate immune response is implicating the PI3K-AKT/PKB pathway. Required for protein synthesis in mitochondria. In mitochondrial translation may be involved in formation of functional 55S mitoribosomes; the function seems to involve its RNA-binding activity. Acts as a RNA modification reader, which specifically recognizes and binds mitochondrial RNAs modified by C5-methylcytosine (m5C) in response to stress, and promotes recruitment of the mitochondrial degradosome complex, leading to their degradation. May be involved in the nucleolar ribosome maturation process; the function may involve the exchange of FBL for RRP1 in the association with pre-ribosome particles. Involved in regulation of RNA splicing by inhibiting the RNA-binding capacity of SRSF1 and its phosphorylation. Is required for the nuclear translocation of splicing factor U2AF1L4. Involved in regulation of CDKN2A- and HRK-mediated apoptosis. May be involved in regulation of FOXC1 transcriptional activity and NFY/CCAAT-binding factor complex-mediated transcription. May play a role in antibacterial defense. Acts as a regulator of DNA repair via homologous recombination by inhibiting the activity of MRE11: interacts with unphosphorylated MRE11 and RAD50 in absence of DNA damage, preventing formation and activity of the MRN complex. Following DNA damage, dissociates from phosphorylated MRE11, allowing formation of the MRN complex. This chain is Complement component 1 Q subcomponent-binding protein, mitochondrial (C1qbp), found in Mus musculus (Mouse).